We begin with the raw amino-acid sequence, 471 residues long: Histidinol dehydrogenase (471 aa).

Residues tyrosine 139, glutamine 204, and asparagine 236 each contribute to the NAD(+) site. 3 residues coordinate substrate: threonine 259, glutamine 281, and histidine 284. Zn(2+)-binding residues include glutamine 281 and histidine 284. Catalysis depends on proton acceptor residues glutamate 350 and histidine 351. Positions 351, 384, 438, and 443 each coordinate substrate. A Zn(2+)-binding site is contributed by aspartate 384. Residue histidine 443 coordinates Zn(2+).

Belongs to the histidinol dehydrogenase family. Zn(2+) is required as a cofactor.

The catalysed reaction is L-histidinol + 2 NAD(+) + H2O = L-histidine + 2 NADH + 3 H(+). It functions in the pathway amino-acid biosynthesis; L-histidine biosynthesis; L-histidine from 5-phospho-alpha-D-ribose 1-diphosphate: step 9/9. Catalyzes the sequential NAD-dependent oxidations of L-histidinol to L-histidinaldehyde and then to L-histidine. The sequence is that of Histidinol dehydrogenase from Bifidobacterium longum (strain NCC 2705).